A 617-amino-acid chain; its full sequence is ATP-dependent zinc metalloprotease FtsH (617 aa).

The Cytoplasmic portion of the chain corresponds to 1–7 (MKIPFDR). A helical transmembrane segment spans residues 8–28 (WLGWPTLLLLLLGLWLLGSSL). Residues 29-102 (RDQRTVEAVP…VSYRRVRESN (74 aa)) are Periplasmic-facing. The chain crosses the membrane as a helical span at residues 103-123 (WLSQLLSWMAGPLLLLGFWYF). The Cytoplasmic portion of the chain corresponds to 124 to 617 (MSRRIDGQQG…GRPAAIRQVA (494 aa)). 198-205 (GPTGTGKT) lines the ATP pocket. Residue His421 participates in Zn(2+) binding. Glu422 is an active-site residue. Residues His425 and Asp498 each contribute to the Zn(2+) site.

This sequence in the central section; belongs to the AAA ATPase family. It in the C-terminal section; belongs to the peptidase M41 family. In terms of assembly, homohexamer. Zn(2+) serves as cofactor.

It is found in the cell inner membrane. Acts as a processive, ATP-dependent zinc metallopeptidase for both cytoplasmic and membrane proteins. Plays a role in the quality control of integral membrane proteins. The chain is ATP-dependent zinc metalloprotease FtsH from Methylibium petroleiphilum (strain ATCC BAA-1232 / LMG 22953 / PM1).